A 791-amino-acid chain; its full sequence is RAS guanyl-releasing protein 1 (791 aa).

In terms of domain architecture, N-terminal Ras-GEF spans 49–172 (LGKLSKGASL…RLIDTAQINS (124 aa)). The interval 53–106 (SKGASLDDLIQMCIQAFDLDGNMGQNSELLQIMLTMHGFLLPSTELLMKLRTLY) is ras exchanger motif region; required for transforming activity. Residues 201–432 (EPQELAEHLT…YELSYAREPR (232 aa)) enclose the Ras-GEF domain. EF-hand domains lie at 466 to 501 (HVQR…FPFS) and 502 to 528 (FCVM…ASSI). The Ca(2+) site is built by Asp479, Asp481, Asp483, Tyr485, Glu490, Asp506, Asp508, Glu510, and Glu517. Residues 537–587 (LHNFQETTYLRPTFCDNCAGFLWGVIKQGYRCKDCGMNCHKQCKELVVFEC) form a Phorbol-ester/DAG-type zinc finger. Positions 683–695 (QVPSPQRSRTPGL) are enriched in polar residues. The interval 683–715 (QVPSPQRSRTPGLTSHLPISPMPSPCPSPVPTR) is disordered. Residues 702–712 (SPMPSPCPSPV) show a composition bias toward pro residues. The stretch at 728 to 785 (IRKARAELRGGKAGIQELEKEKALLKEENTTLKIQLKDAQRRVETLRAELRKYVLDSD) forms a coiled coil.

This sequence belongs to the RASGRP family.

The protein localises to the cytoplasm. It is found in the cytosol. The protein resides in the cell membrane. It localises to the golgi apparatus membrane. Its subcellular location is the endoplasmic reticulum membrane. Its activity is regulated as follows. Regulated by F-actin polymerization and probably by calcium. In terms of biological role, functions as a diacylglycerol (DAG)-regulated nucleotide exchange factor specifically activating Ras through the exchange of bound GDP for GTP. In Xenopus tropicalis (Western clawed frog), this protein is RAS guanyl-releasing protein 1 (rasgrp1).